Here is a 176-residue protein sequence, read N- to C-terminus: ATP-dependent protease subunit HslV (176 aa).

The active site involves Thr5. Na(+)-binding residues include Gly161, Cys164, and Thr167.

The protein belongs to the peptidase T1B family. HslV subfamily. As to quaternary structure, a double ring-shaped homohexamer of HslV is capped on each side by a ring-shaped HslU homohexamer. The assembly of the HslU/HslV complex is dependent on binding of ATP.

The protein localises to the cytoplasm. The catalysed reaction is ATP-dependent cleavage of peptide bonds with broad specificity.. Allosterically activated by HslU binding. Its function is as follows. Protease subunit of a proteasome-like degradation complex believed to be a general protein degrading machinery. In Sulfurovum sp. (strain NBC37-1), this protein is ATP-dependent protease subunit HslV.